The chain runs to 396 residues: Elongation factor Tu (396 aa).

The tr-type G domain maps to 10–206; the sequence is KEHVNIGTIG…AVDTWIETPV (197 aa). The tract at residues 19–26 is G1; it reads GHVDHGKT. Residue 19–26 coordinates GTP; it reads GHVDHGKT. Threonine 26 contributes to the Mg(2+) binding site. The interval 60 to 64 is G2; the sequence is GITIN. A G3 region spans residues 81–84; it reads DCPG. Residues 81–85 and 136–139 each bind GTP; these read DCPGH and NKCD. Residues 136–139 are G4; sequence NKCD. The interval 176–178 is G5; sequence SAL.

Belongs to the TRAFAC class translation factor GTPase superfamily. Classic translation factor GTPase family. EF-Tu/EF-1A subfamily. In terms of assembly, monomer.

The protein resides in the cytoplasm. It carries out the reaction GTP + H2O = GDP + phosphate + H(+). In terms of biological role, GTP hydrolase that promotes the GTP-dependent binding of aminoacyl-tRNA to the A-site of ribosomes during protein biosynthesis. The polypeptide is Elongation factor Tu (Mycoplasmopsis agalactiae (strain NCTC 10123 / CIP 59.7 / PG2) (Mycoplasma agalactiae)).